Reading from the N-terminus, the 127-residue chain is Large ribosomal subunit protein bL19 (127 aa).

This sequence belongs to the bacterial ribosomal protein bL19 family.

In terms of biological role, this protein is located at the 30S-50S ribosomal subunit interface and may play a role in the structure and function of the aminoacyl-tRNA binding site. The chain is Large ribosomal subunit protein bL19 from Bradyrhizobium sp. (strain BTAi1 / ATCC BAA-1182).